We begin with the raw amino-acid sequence, 419 residues long: eIF5-mimic protein 2 (419 aa).

Met-1 is modified (N-acetylmethionine). Positions 1–15 (MNNQKQQKPTLSGQR) are enriched in polar residues. The tract at residues 1–26 (MNNQKQQKPTLSGQRFKTRKRDEKER) is disordered. Residue Ser-12 is modified to Phosphoserine. Residues 247-414 (NQQTIGARKE…KNAEEESESE (168 aa)) form the W2 domain. Lys-368 is covalently cross-linked (Glycyl lysine isopeptide (Lys-Gly) (interchain with G-Cter in SUMO2)). Ser-411 and Ser-413 each carry phosphoserine.

This sequence belongs to the BZW family.

Its function is as follows. Translation initiation regulator which represses repeat-associated non-AUG (RAN) initiated translation probably by acting as a competitive inhibitor of eukaryotic translation initiation factor 5 (EIF5) function. Enhances histone H4 gene transcription but does not seem to bind DNA directly. The polypeptide is eIF5-mimic protein 2 (BZW1) (Homo sapiens (Human)).